Reading from the N-terminus, the 729-residue chain is Probable ATP-dependent RNA helicase DDX17 (729 aa).

The disordered stretch occupies residues 20–115 (EAATVASATG…PPKKFGNPGE (96 aa)). Residue serine 64 is modified to Phosphoserine. Basic and acidic residues predominate over residues 86-95 (GDRDRDRDRG). Positions 96–105 (GFGARGGGGL) are enriched in gly residues. An N6-acetyllysine; by EP300 mark is found at lysine 108, lysine 109, and lysine 121. Lysine 129 is covalently cross-linked (Glycyl lysine isopeptide (Lys-Gly) (interchain with G-Cter in SUMO); alternate). Lysine 129 is covalently cross-linked (Glycyl lysine isopeptide (Lys-Gly) (interchain with G-Cter in SUMO1); alternate). A Glycyl lysine isopeptide (Lys-Gly) (interchain with G-Cter in SUMO2); alternate cross-link involves residue lysine 129. The short motif at 171 to 199 (FAFHHANFPQYVMDVLMDQHFTEPTPIQC) is the Q motif element. The Helicase ATP-binding domain maps to 202–377 (FPLALSGRDM…EDFLRDYTQI (176 aa)). 215–222 (AQTGSGKT) provides a ligand contact to ATP. Positions 325–328 (DEAD) match the DEAD box motif. A Helicase C-terminal domain is found at 405–552 (KLIQLMEEIM…AINPKLMQLV (148 aa)). A Phosphothreonine modification is found at threonine 523. Lysine 528 is covalently cross-linked (Glycyl lysine isopeptide (Lys-Gly) (interchain with G-Cter in SUMO2)). Positions 547–729 (KLMQLVDHRG…PPPPPPPSRK (183 aa)) are transactivation domain. Disordered stretches follow at residues 551–623 (LVDH…GSPN) and 659–729 (TYGA…PSRK). A compositionally biased stretch (polar residues) spans 568–578 (RTTSSANNPNL). Over residues 583–610 (ECDRRLRGVKDGGRRDSASYRDRSETDR) the composition is skewed to basic and acidic residues. Residues 659–688 (TYGASSTTSTGRSSQSSSQQFSGIGRSGQQ) are compositionally biased toward low complexity. Residue arginine 684 is modified to Omega-N-methylarginine. Residues 689-698 (PQPLMSQQFA) are compositionally biased toward polar residues. The span at 717-729 (YPPPPPPPPPSRK) shows a compositional bias: pro residues. An interaction with YAP1 region spans residues 718–726 (PPPPPPPPP).

Belongs to the DEAD box helicase family. DDX5/DBP2 subfamily. In terms of assembly, interacts with DDX5 in an RNA-independent manner. Interacts with CDK9 transcription elongation complex under basal conditions. Following cell stimulation with poly(I:C), a synthetic double-stranded RNA mimicking viral infection, the interaction with CDK9 is decreased. Interacts with ESR1 in an estrogen-independent manner. Interacts with HNRNPH1; this interaction is important for the regulation of alternative splicing on G-quadruplex structures. At high, but not low, cell density, interacts with DROSHA and DGCR8, the core components of the microprocessor complex involved in the maturation of primary microRNAs (pri-miRNAs) into pre-miRNAs. The interaction with DGCR8 is reduced during mitosis. At low, but not high, cell density, interacts with YAP1 and with its paralog, WWTR1/TAZ. Interactions with DROSHA and YAP1 are mutually exclusive. In vitro, the pre-miRNA processing activity of the DDX17-containing microprocessor complex is weaker than that of the DROSHA/DGCR8 microprocessor complex devoid of DDX17. Interacts with UPF3B. Interacts with NFAT5; this interaction leads to DDX17 recruitment to LNC2 and S100A4 promoters and NFAT5-mediated DDX17-enhanced transactivation. Interacts with HDAC1, HDAC2 and HDAC3; this interaction with HDAC1 and HDAC3, but not HDAC2, depends upon DDX17 acetylation. Interacts with ZC3HAV1 (via N-terminal domain) in an RNA-independent manner. Interacts with EXOSC3/RRP40 and EXOSC5/RRP46; this interaction may be indirect and mediated by ZC3HAV1-binding. Interacts with EP300; this interaction leads to acetylation at lysine residues. Interacts with CREBBP/CBP and KAT2B/P/CAF. Directly interacts with CTNNB1. Interacts with MYOD1. Interacts with TP53. Interacts with DCP1A in an RNA-independent manner. Interacts with DCP2 in an RNA-dependent manner. Interacts with DHX36; this interaction occurs in a RNA-dependent manner. Interacts with ERCC6. Post-translationally, sumoylation significantly increases stability. It also promotes interaction specifically with HDAC1 (but not HDAC2, nor HDAC3) and strongly stimulates ESR1 and TP53 coactivation. Acetylation at lysine residues stabilizes the protein, stimulates interaction with HDAC1 and HDAC3, but not HDAC2, and represses ESR1 and TP53 coactivation activity. As to expression, widely expressed. Low expression, if any, in normal colonic epithelial cells (at protein level). Levels tend to increase during colon cancer progression, from very low in benign hyperplastic polyps to very high in tubular and villous adenomas.

It is found in the nucleus. It localises to the nucleolus. The protein resides in the cytoplasm. Its subcellular location is the cytosol. The catalysed reaction is ATP + H2O = ADP + phosphate + H(+). Its function is as follows. As an RNA helicase, unwinds RNA and alters RNA structures through ATP binding and hydrolysis. Involved in multiple cellular processes, including pre-mRNA splicing, alternative splicing, ribosomal RNA processing and miRNA processing, as well as transcription regulation. Regulates the alternative splicing of exons exhibiting specific features. For instance, promotes the inclusion of AC-rich alternative exons in CD44 transcripts. This function requires the RNA helicase activity. Affects NFAT5 and histone macro-H2A.1/MACROH2A1 alternative splicing in a CDK9-dependent manner. In NFAT5, promotes the introduction of alternative exon 4, which contains 2 stop codons and may target NFAT5 exon 4-containing transcripts to nonsense-mediated mRNA decay, leading to the down-regulation of NFAT5 protein. Affects splicing of mediators of steroid hormone signaling pathway, including kinases that phosphorylates ESR1, such as CDK2, MAPK1 and GSK3B, and transcriptional regulators, such as CREBBP, MED1, NCOR1 and NCOR2. By affecting GSK3B splicing, participates in ESR1 and AR stabilization. In myoblasts and epithelial cells, cooperates with HNRNPH1 to control the splicing of specific subsets of exons. In addition to binding mature mRNAs, also interacts with certain pri-microRNAs, including MIR663/miR-663a, MIR99B/miR-99b, and MIR6087/miR-6087. Binds pri-microRNAs on the 3' segment flanking the stem loop via the 5'-[ACG]CAUC[ACU]-3' consensus sequence. Required for the production of subsets of microRNAs, including MIR21 and MIR125B1. May be involved not only in microRNA primary transcript processing, but also stabilization. Participates in MYC down-regulation at high cell density through the production of MYC-targeting microRNAs. Along with DDX5, may be involved in the processing of the 32S intermediate into the mature 28S ribosomal RNA. Promoter-specific transcription regulator, functioning as a coactivator or corepressor depending on the context of the promoter and the transcriptional complex in which it exists. Enhances NFAT5 transcriptional activity. Synergizes with TP53 in the activation of the MDM2 promoter; this activity requires acetylation on lysine residues. May also coactivate MDM2 transcription through a TP53-independent pathway. Coactivates MMP7 transcription. Along with CTNNB1, coactivates MYC, JUN, FOSL1 and cyclin D1/CCND1 transcription. Alone or in combination with DDX5 and/or SRA1 non-coding RNA, plays a critical role in promoting the assembly of proteins required for the formation of the transcription initiation complex and chromatin remodeling leading to coactivation of MYOD1-dependent transcription. This helicase-independent activity is required for skeletal muscle cells to properly differentiate into myotubes. During epithelial-to-mesenchymal transition, coregulates SMAD-dependent transcriptional activity, directly controlling key effectors of differentiation, including miRNAs which in turn directly repress its expression. Plays a role in estrogen and testosterone signaling pathway at several levels. Mediates the use of alternative promoters in estrogen-responsive genes and regulates transcription and splicing of a large number of steroid hormone target genes. Contrary to splicing regulation activity, transcriptional coregulation of the estrogen receptor ESR1 is helicase-independent. Plays a role in innate immunity. Specifically restricts bunyavirus infection, including Rift Valley fever virus (RVFV) or La Crosse virus (LACV), but not vesicular stomatitis virus (VSV), in an interferon- and DROSHA-independent manner. Binds to RVFV RNA, likely via structured viral RNA elements. Promotes mRNA degradation mediated by the antiviral zinc-finger protein ZC3HAV1, in an ATPase-dependent manner. The protein is Probable ATP-dependent RNA helicase DDX17 (DDX17) of Homo sapiens (Human).